The chain runs to 2108 residues: General negative regulator of transcription subunit 1 (2108 aa).

2 coiled-coil regions span residues 795 to 813 (NVTLANLNNKVDELKKSLT) and 1021 to 1046 (MQQHQQQMLIYQQRQQQQQQRQQQQQ). The segment at 1323-1352 (QQQQLQKSRLNQPSQSAQPPGVNVPNPQGG) is disordered. The span at 1329–1339 (KSRLNQPSQSA) shows a compositional bias: polar residues. The segment covering 1340 to 1352 (QPPGVNVPNPQGG) has biased composition (low complexity). Position 2102 is a phosphothreonine (T2102).

Belongs to the CNOT1 family. In terms of assembly, forms a NOT protein complex that comprises NOT1, NOT2, NOT3, NOT4 and NOT5. Subunit of the 1.0 MDa CCR4-NOT core complex that contains CCR4, CAF1, NOT1, NOT2, NOT3, NOT4, NOT5, CAF40 and CAF130. In the complex interacts with CCR4, POP2, NOT2, NOT4 and NOT5. The core complex probably is part of a less characterized 1.9 MDa CCR4-NOT complex.

The protein resides in the cytoplasm. It is found in the nucleus. In terms of biological role, acts as a component of the CCR4-NOT core complex, which in the nucleus seems to be a general transcription factor, and in the cytoplasm the major mRNA deadenylase involved in mRNA turnover. The NOT protein subcomplex negatively regulates the basal and activated transcription of many genes. Preferentially affects TC-type TATA element-dependent transcription. Could directly or indirectly inhibit component(s) of the general transcription machinery. In Saccharomyces cerevisiae (strain ATCC 204508 / S288c) (Baker's yeast), this protein is General negative regulator of transcription subunit 1 (CDC39).